The sequence spans 205 residues: High frequency lysogenization protein HflD homolog (205 aa).

This sequence belongs to the HflD family.

It is found in the cytoplasm. It localises to the cell inner membrane. The chain is High frequency lysogenization protein HflD homolog from Shewanella halifaxensis (strain HAW-EB4).